The following is a 356-amino-acid chain: MEWWKKKSLRAIIKRERLVRGHERGGTLLEEIIKSCNGKANPIKIFSADQILEATDTFSESNRVSELFDEIPYDWYYSGKNNNHHHHHKLLLIKKWRYRFSEHNGGNFCRDIAISSIVSGHKNFMQLVGCCLESEHPVLVYRASKKPTSLDLKMVVSWRQRLKIAEEIATALAYLHTAFPRPFVYRILRLEDILLDDEDGVAKLCNFSYCVSIPQGETFVKLGNGCIGGDYDYMDDNYLINGIVSEKTDAFGFGIFMQKLLMGEERFHELCYDRSDLTTFENRRKFAKCIDEIVDSNMLEKIGDVTEEERCRMEAFIVLSERCIGLRGEVPKMVEVAKELKRFLRDSSSSCGETSL.

Positions 62–356 constitute a Protein kinase domain; it reads NRVSELFDEI…SSSSCGETSL (295 aa). ATP is bound by residues 68–76 and Lys-94; that span reads FDEIPYDWY.

It belongs to the protein kinase superfamily. Ser/Thr protein kinase family. ZRK subfamily. As to quaternary structure, interacts with RPP13L4/ZAR1.

The chain is Non-functional pseudokinase ZRK15 from Arabidopsis thaliana (Mouse-ear cress).